Reading from the N-terminus, the 127-residue chain is Glycine cleavage system H protein (127 aa).

Residues Thr-24–Lys-105 form the Lipoyl-binding domain. Lys-65 is modified (N6-lipoyllysine).

The protein belongs to the GcvH family. In terms of assembly, the glycine cleavage system is composed of four proteins: P, T, L and H. It depends on (R)-lipoate as a cofactor.

The glycine cleavage system catalyzes the degradation of glycine. The H protein shuttles the methylamine group of glycine from the P protein to the T protein. The sequence is that of Glycine cleavage system H protein from Chlorobaculum parvum (strain DSM 263 / NCIMB 8327) (Chlorobium vibrioforme subsp. thiosulfatophilum).